We begin with the raw amino-acid sequence, 428 residues long: GTPase Obg (428 aa).

One can recognise an Obg domain in the interval 1-158 (MFIDEVIITV…IKVKLELKLL (158 aa)). Residues 159–330 (ADVALVGYPS…ILYKTYDMLS (172 aa)) form the OBG-type G domain. Residues 165–172 (GYPSVGKS), 190–194 (FTTLE), 212–215 (DIPG), 282–285 (NKMD), and 311–313 (SVL) contribute to the GTP site. Mg(2+) is bound by residues Ser172 and Thr192. Positions 349–428 (ELKIEKEDFE…IADVEFEYFE (80 aa)) constitute an OCT domain.

Belongs to the TRAFAC class OBG-HflX-like GTPase superfamily. OBG GTPase family. In terms of assembly, monomer. The cofactor is Mg(2+).

The protein localises to the cytoplasm. In terms of biological role, an essential GTPase which binds GTP, GDP and possibly (p)ppGpp with moderate affinity, with high nucleotide exchange rates and a fairly low GTP hydrolysis rate. Plays a role in control of the cell cycle, stress response, ribosome biogenesis and in those bacteria that undergo differentiation, in morphogenesis control. The polypeptide is GTPase Obg (Fusobacterium nucleatum subsp. nucleatum (strain ATCC 25586 / DSM 15643 / BCRC 10681 / CIP 101130 / JCM 8532 / KCTC 2640 / LMG 13131 / VPI 4355)).